Here is a 338-residue protein sequence, read N- to C-terminus: UDP-N-acetylenolpyruvoylglucosamine reductase (338 aa).

Positions isoleucine 17–lysine 188 constitute an FAD-binding PCMH-type domain. Arginine 164 is an active-site residue. Catalysis depends on serine 237, which acts as the Proton donor. Glutamate 333 is a catalytic residue.

The protein belongs to the MurB family. FAD serves as cofactor.

It localises to the cytoplasm. It carries out the reaction UDP-N-acetyl-alpha-D-muramate + NADP(+) = UDP-N-acetyl-3-O-(1-carboxyvinyl)-alpha-D-glucosamine + NADPH + H(+). It participates in cell wall biogenesis; peptidoglycan biosynthesis. In terms of biological role, cell wall formation. In Porphyromonas gingivalis (strain ATCC BAA-308 / W83), this protein is UDP-N-acetylenolpyruvoylglucosamine reductase.